Here is a 490-residue protein sequence, read N- to C-terminus: Betaine aldehyde dehydrogenase (490 aa).

The K(+) site is built by serine 26, isoleucine 27, and aspartate 93. 150-152 (GAW) is an NAD(+) binding site. The active-site Charge relay system is lysine 162. 176–179 (KPSE) provides a ligand contact to NAD(+). Position 180 (valine 180) interacts with K(+). 230 to 233 (GTDT) is an NAD(+) binding site. Residue leucine 246 participates in K(+) binding. Catalysis depends on glutamate 252, which acts as the Proton acceptor. Positions 254, 286, and 387 each coordinate NAD(+). The Nucleophile role is filled by cysteine 286. Cysteine 286 is subject to Cysteine sulfenic acid (-SOH). K(+)-binding residues include lysine 457 and glycine 460. Glutamate 464 serves as the catalytic Charge relay system.

Belongs to the aldehyde dehydrogenase family. As to quaternary structure, dimer of dimers. K(+) is required as a cofactor.

The catalysed reaction is betaine aldehyde + NAD(+) + H2O = glycine betaine + NADH + 2 H(+). The protein operates within amine and polyamine biosynthesis; betaine biosynthesis via choline pathway; betaine from betaine aldehyde: step 1/1. In terms of biological role, involved in the biosynthesis of the osmoprotectant glycine betaine. Catalyzes the irreversible oxidation of betaine aldehyde to the corresponding acid. The polypeptide is Betaine aldehyde dehydrogenase (Pseudomonas syringae pv. tomato (strain ATCC BAA-871 / DC3000)).